Reading from the N-terminus, the 479-residue chain is Ammonium transporter Rh type C (479 aa).

The Cytoplasmic segment spans residues 1 to 9 (MAWNTNLRW). Residues 10–30 (RLPLTCLLLQVVMVILFGVFV) traverse the membrane as a helical segment. Residues 31–60 (RYDFEADAHWWSERTHKNLSDVENEFYYRY) lie on the Extracellular side of the membrane. N48 carries an N-linked (GlcNAc...) asparagine glycan. The chain crosses the membrane as a helical span at residues 61 to 81 (PSFQDVHVMVFVGFGFLMTFL). Residues 82–85 (QRYG) are Cytoplasmic-facing. The helical transmembrane segment at 86–106 (FSAVGFNFLLAAFGIQWALLM) threads the bilayer. The Extracellular segment spans residues 107-123 (QGWFHFLQGRYIVVGVE). Residues 124-144 (NLINADFCVASVCVAFGAVLG) form a helical membrane-spanning segment. Topologically, residues 145–148 (KVSP) are cytoplasmic. A helical membrane pass occupies residues 149-169 (IQLLIMTFFQVTLFAVNEFIL). At 170-177 (LNLLKVKD) the chain is on the extracellular side. The helical transmembrane segment at 178–200 (AGGSMTIHTFGAYFGLTVTRILY) threads the bilayer. Over 201–218 (RRNLEQSKERQNSVYQSD) the chain is Cytoplasmic. A helical membrane pass occupies residues 219 to 239 (LFAMIGTLFLWMYWPSFNSAI). The Extracellular portion of the chain corresponds to 240-250 (SYHGDSQHRAA). A helical transmembrane segment spans residues 251–271 (INTYCSLAACVLTSVAISSAL). Topologically, residues 272–281 (HKKGKLDMVH) are cytoplasmic. The helical transmembrane segment at 282–302 (IQNATLAGGVAVGTAAEMMLM) threads the bilayer. Position 303 (P303) is a topological domain, extracellular. A helical transmembrane segment spans residues 304–324 (YGALIIGFVCGIISTLGFVYL). Topologically, residues 325 to 345 (TPFLESRLHIQDTCGINNLHG) are cytoplasmic. The chain crosses the membrane as a helical span at residues 346-366 (IPGIIGGIVGAVTAASASLEV). Topologically, residues 367–394 (YGKEGLVHSFDFQGFKGDWTARTQGKFQ) are extracellular. The helical transmembrane segment at 395–415 (IYGLLVTLAMALMGGIIVGLI) threads the bilayer. The Cytoplasmic segment spans residues 416-479 (LRLPFWGQPS…PMASSVPLVP (64 aa)).

The protein belongs to the ammonium transporter (TC 2.A.49) family. Rh subfamily. In terms of assembly, homotrimer. In terms of processing, N-glycosylated.

The protein resides in the cell membrane. It is found in the apical cell membrane. The catalysed reaction is NH4(+)(in) = NH4(+)(out). It catalyses the reaction methylamine(out) = methylamine(in). The enzyme catalyses CO2(out) = CO2(in). In terms of biological role, ammonium transporter involved in the maintenance of acid-base homeostasis. Transports ammonium and its related derivative methylammonium across the plasma membrane of epithelial cells likely contributing to renal transepithelial ammonia transport and ammonia metabolism. Postulated to primarily mediate an electroneutral bidirectional transport of NH3 ammonia species according to a mechanism that implies interaction of an NH4(+) ion with acidic residues of the pore entry followed by dissociation of NH4(+) into NH3 and H(+). As a result NH3 transits through the central pore and is protonated on the extracellular side reforming NH4(+). May act as a CO2 channel providing for renal acid secretion. This is Ammonium transporter Rh type C (RHCG) from Pan troglodytes (Chimpanzee).